We begin with the raw amino-acid sequence, 60 residues long: Cytotoxin 7 (60 aa).

4 cysteine pairs are disulfide-bonded: Cys3/Cys21, Cys14/Cys38, Cys42/Cys53, and Cys54/Cys59.

It belongs to the three-finger toxin family. Short-chain subfamily. Type IA cytotoxin sub-subfamily. In terms of assembly, monomer in solution; Homodimer and oligomer in the presence of negatively charged lipids forming a pore with a size ranging between 20 and 30 Angstroms. Expressed by the venom gland.

Its subcellular location is the secreted. The protein localises to the target cell membrane. Shows cytolytic activity on many different cells by forming pore in lipid membranes. In vivo, increases heart rate or kills the animal by cardiac arrest. In addition, it binds to heparin with high affinity, interacts with Kv channel-interacting protein 1 (KCNIP1) in a calcium-independent manner, and binds to integrin alpha-V/beta-3 (ITGAV/ITGB3) with moderate affinity. Preferentially binds acidic phospholipids like phosphatidylserine, phosphatidic acid and phosphatidyl glycerol. Has hemolytic activity towards human erythrocytes (EC(50)=0.171 uM) and cytolytic activity towards various cell lines. The chain is Cytotoxin 7 from Naja naja (Indian cobra).